Reading from the N-terminus, the 203-residue chain is Akirin-2 (203 aa).

Residues Ser-18 and Ser-21 each carry the phosphoserine modification. Positions 22-27 (PKRRRC) match the Nuclear localization signal motif. Position 57 is a phosphoserine (Ser-57). Positions 115 to 137 (PHAFLLSGPASPGTPSGTSSPLK) are disordered. Residues 119 to 135 (LLSGPASPGTPSGTSSP) are compositionally biased toward low complexity. The short motif at 200–203 (SYVS) is the SYVS motif element.

This sequence belongs to the akirin family. Homodimer. Interacts with IPO9; the interaction is direct. Associates with 20S and 26S proteasomes. Interacts with SMARCD1; promoting SWI/SNF complex recruitment. Interacts with NFKBIZ. Interacts with YWHAB. In terms of processing, polyubiquitinated. Polyubiquitination is dependent of UBR5 that extends pre-ubiquitinated AKIRIN2.

The protein localises to the nucleus. It is found in the cytoplasm. Its subcellular location is the membrane. In terms of biological role, molecular adapter that acts as a bridge between a variety of multiprotein complexes, and which is involved in embryonic development, immunity, myogenesis and brain development. Plays a key role in nuclear protein degradation by promoting import of proteasomes into the nucleus: directly binds to fully assembled 20S proteasomes at one end and to nuclear import receptor IPO9 at the other end, bridging them together and mediating the import of pre-assembled proteasome complexes through the nuclear pore. Involved in innate immunity by regulating the production of interleukin-6 (IL6) downstream of Toll-like receptor (TLR): acts by bridging the NF-kappa-B inhibitor NFKBIZ and the SWI/SNF complex, leading to promote induction of IL6. Also involved in adaptive immunity by promoting B-cell activation. Involved in brain development: required for the survival and proliferation of cerebral cortical progenitor cells. Involved in myogenesis: required for skeletal muscle formation and skeletal development, possibly by regulating expression of muscle differentiation factors. The protein is Akirin-2 of Bos taurus (Bovine).